The primary structure comprises 58 residues: Large ribosomal subunit protein bL32 (58 aa).

Basic residues predominate over residues 1–20 (MALPKHKKSKSKRDKRRTHQ). The tract at residues 1-26 (MALPKHKKSKSKRDKRRTHQKLTAPN) is disordered.

Belongs to the bacterial ribosomal protein bL32 family.

The sequence is that of Large ribosomal subunit protein bL32 from Desulfatibacillum aliphaticivorans.